Here is a 1032-residue protein sequence, read N- to C-terminus: Serine/threonine-protein kinase ppk31 (1032 aa).

The 70-residue stretch at 3–72 folds into the PAS domain; it reads NPEQLKRILS…KATDNLFRKS (70 aa). The Protein kinase domain maps to 528–877; sequence FILLKEINRG…YQEIKKHPFF (350 aa). ATP contacts are provided by residues 534–542 and Lys-557; that span reads INRGAYGRV. Asp-652 acts as the Proton acceptor in catalysis. A disordered region spans residues 938–963; that stretch reads PKATPADSGTETSNSAAFSASEEETT. The segment covering 947–957 has biased composition (low complexity); sequence TETSNSAAFSA.

This sequence belongs to the protein kinase superfamily. Ser/Thr protein kinase family.

It is found in the cytoplasm. It carries out the reaction L-seryl-[protein] + ATP = O-phospho-L-seryl-[protein] + ADP + H(+). The catalysed reaction is L-threonyl-[protein] + ATP = O-phospho-L-threonyl-[protein] + ADP + H(+). Functionally, has a role in meiosis. This is Serine/threonine-protein kinase ppk31 (ppk31) from Schizosaccharomyces pombe (strain 972 / ATCC 24843) (Fission yeast).